A 155-amino-acid polypeptide reads, in one-letter code: Ribosome maturation factor RimP (155 aa).

The protein belongs to the RimP family.

The protein resides in the cytoplasm. In terms of biological role, required for maturation of 30S ribosomal subunits. This Synechococcus sp. (strain CC9605) protein is Ribosome maturation factor RimP.